Reading from the N-terminus, the 200-residue chain is Small ribosomal subunit protein eS1 (200 aa).

This sequence belongs to the eukaryotic ribosomal protein eS1 family.

In Thermococcus sibiricus (strain DSM 12597 / MM 739), this protein is Small ribosomal subunit protein eS1.